The primary structure comprises 100 residues: MPFLVALSGIISGVHDHSMTVRLDQQTRQRLQDIVKGGYRSANAAIVDAINKRWEALHDEQLDAAYAAAIHDNPAYPYESEAERSAARARRNARQQRSAQ.

Positions 77 to 100 (PYESEAERSAARARRNARQQRSAQ) are disordered.

In terms of assembly, forms a complex with cognate toxin MazF4.

Its function is as follows. Antitoxin component of a type II toxin-antitoxin (TA) system. Labile antitoxin that binds to cognate MazF4 toxin and counteracts its endoribonuclease activity. This is Probable antitoxin MazE4 (mazE4) from Mycobacterium tuberculosis (strain CDC 1551 / Oshkosh).